A 219-amino-acid chain; its full sequence is ATP synthase F(0) complex subunit a (219 aa).

Transmembrane regions (helical) follow at residues 4–24 (PTYL…ILFP), 61–81 (WAAL…LGLL), 90–110 (QLSL…IIGM), 124–144 (EGTP…SLFI), 172–192 (FVLL…LFLL), and 194–214 (LLEI…LSLY).

This sequence belongs to the ATPase A chain family. Component of the ATP synthase complex composed at least of ATP5F1A/subunit alpha, ATP5F1B/subunit beta, ATP5MC1/subunit c (homooctomer), MT-ATP6/subunit a, MT-ATP8/subunit 8, ATP5ME/subunit e, ATP5MF/subunit f, ATP5MG/subunit g, ATP5MK/subunit k, ATP5MJ/subunit j, ATP5F1C/subunit gamma, ATP5F1D/subunit delta, ATP5F1E/subunit epsilon, ATP5PF/subunit F6, ATP5PB/subunit b, ATP5PD/subunit d, ATP5PO/subunit OSCP. ATP synthase complex consists of a soluble F(1) head domain (subunits alpha(3) and beta(3)) - the catalytic core - and a membrane F(0) domain - the membrane proton channel (subunits c, a, 8, e, f, g, k and j). These two domains are linked by a central stalk (subunits gamma, delta, and epsilon) rotating inside the F1 region and a stationary peripheral stalk (subunits F6, b, d, and OSCP). Interacts with DNAJC30; interaction is direct.

The protein resides in the mitochondrion inner membrane. It carries out the reaction H(+)(in) = H(+)(out). Subunit a, of the mitochondrial membrane ATP synthase complex (F(1)F(0) ATP synthase or Complex V) that produces ATP from ADP in the presence of a proton gradient across the membrane which is generated by electron transport complexes of the respiratory chain. ATP synthase complex consist of a soluble F(1) head domain - the catalytic core - and a membrane F(1) domain - the membrane proton channel. These two domains are linked by a central stalk rotating inside the F(1) region and a stationary peripheral stalk. During catalysis, ATP synthesis in the catalytic domain of F(1) is coupled via a rotary mechanism of the central stalk subunits to proton translocation. With the subunit c (ATP5MC1), forms the proton-conducting channel in the F(0) domain, that contains two crucial half-channels (inlet and outlet) that facilitate proton movement from the mitochondrial intermembrane space (IMS) into the matrix. Protons are taken up via the inlet half-channel and released through the outlet half-channel, following a Grotthuss mechanism. This chain is ATP synthase F(0) complex subunit a, found in Oncorhynchus masou (Cherry salmon).